We begin with the raw amino-acid sequence, 207 residues long: Varv peptide A/Kalata-B1 (207 aa).

An N-terminal signal peptide occupies residues 1 to 20 (MKMFIVLVLSAAFALPAAFA). The propeptide occupies 21-66 (TEQDVITLQAYEELLKNGAANGMTKTVISSPVLEEALVSYSKNKLG). Residues 67–95 (GLPVCGETCVGGTCNTPGCSCSWPVCTRN) constitute a cross-link (cyclopeptide (Gly-Asn)). 3 disulfides stabilise this stretch: C71-C85, C75-C87, and C80-C92. A propeptide spanning residues 96–120 (SLESTKSANPLLEEALTAFAKKGLG) is cleaved from the precursor. A cross-link (cyclopeptide (Gly-Asn)) is located at residues 121 to 149 (GLPVCGETCVGGTCNTPGCTCSWPVCTRN). Disulfide bonds link C125–C139, C129–C141, and C134–C146. Residues 150–174 (ALETQKPNHLLEEALVAFAKKGNLG) constitute a propeptide that is removed on maturation. The cyclopeptide (Gly-Asn) cross-link spans 175-203 (GLPVCGETCVGGTCNTPGCSCSWPVCTRN). Intrachain disulfides connect C179-C193, C183-C195, and C188-C200. Residues 204–207 (ALAM) constitute a propeptide that is removed on maturation.

This sequence belongs to the cyclotide family. Moebius subfamily. Post-translationally, varv peptide A and kalata-B1 are cyclic peptides.

Probably participates in a plant defense mechanism. Has hemolytic activity. The chain is Varv peptide A/Kalata-B1 from Viola odorata (Sweet violet).